Consider the following 513-residue polypeptide: ATP synthase subunit alpha 1 (513 aa).

169-176 (GDRQTGKT) is an ATP binding site.

It belongs to the ATPase alpha/beta chains family. F-type ATPases have 2 components, CF(1) - the catalytic core - and CF(0) - the membrane proton channel. CF(1) has five subunits: alpha(3), beta(3), gamma(1), delta(1), epsilon(1). CF(0) has three main subunits: a(1), b(2) and c(9-12). The alpha and beta chains form an alternating ring which encloses part of the gamma chain. CF(1) is attached to CF(0) by a central stalk formed by the gamma and epsilon chains, while a peripheral stalk is formed by the delta and b chains.

It localises to the cell inner membrane. It carries out the reaction ATP + H2O + 4 H(+)(in) = ADP + phosphate + 5 H(+)(out). Functionally, produces ATP from ADP in the presence of a proton gradient across the membrane. The alpha chain is a regulatory subunit. In Nitrosospira multiformis (strain ATCC 25196 / NCIMB 11849 / C 71), this protein is ATP synthase subunit alpha 1.